We begin with the raw amino-acid sequence, 433 residues long: Trigger factor (433 aa).

The region spanning 163–248 (GDTVNIDFSG…VNEIKFKEVP (86 aa)) is the PPIase FKBP-type domain.

The protein belongs to the FKBP-type PPIase family. Tig subfamily.

The protein localises to the cytoplasm. It catalyses the reaction [protein]-peptidylproline (omega=180) = [protein]-peptidylproline (omega=0). Involved in protein export. Acts as a chaperone by maintaining the newly synthesized protein in an open conformation. Functions as a peptidyl-prolyl cis-trans isomerase. The protein is Trigger factor of Staphylococcus aureus (strain Newman).